The chain runs to 155 residues: S-ribosylhomocysteine lyase (155 aa).

Residues H53, H57, and C121 each coordinate Fe cation.

The protein belongs to the LuxS family. As to quaternary structure, homodimer. It depends on Fe cation as a cofactor.

It catalyses the reaction S-(5-deoxy-D-ribos-5-yl)-L-homocysteine = (S)-4,5-dihydroxypentane-2,3-dione + L-homocysteine. In terms of biological role, involved in the synthesis of autoinducer 2 (AI-2) which is secreted by bacteria and is used to communicate both the cell density and the metabolic potential of the environment. The regulation of gene expression in response to changes in cell density is called quorum sensing. Catalyzes the transformation of S-ribosylhomocysteine (RHC) to homocysteine (HC) and 4,5-dihydroxy-2,3-pentadione (DPD). The polypeptide is S-ribosylhomocysteine lyase (Thermus thermophilus (strain ATCC BAA-163 / DSM 7039 / HB27)).